The chain runs to 93 residues: DNA-directed RNA polymerase subunit Rpo11 (93 aa).

This sequence belongs to the archaeal Rpo11/eukaryotic RPB11/RPC19 RNA polymerase subunit family. Part of the RNA polymerase complex.

The protein resides in the cytoplasm. It carries out the reaction RNA(n) + a ribonucleoside 5'-triphosphate = RNA(n+1) + diphosphate. Functionally, DNA-dependent RNA polymerase (RNAP) catalyzes the transcription of DNA into RNA using the four ribonucleoside triphosphates as substrates. This Methanocella arvoryzae (strain DSM 22066 / NBRC 105507 / MRE50) protein is DNA-directed RNA polymerase subunit Rpo11.